We begin with the raw amino-acid sequence, 208 residues long: Imidazoleglycerol-phosphate dehydratase (208 aa).

It belongs to the imidazoleglycerol-phosphate dehydratase family.

It localises to the cytoplasm. The enzyme catalyses D-erythro-1-(imidazol-4-yl)glycerol 3-phosphate = 3-(imidazol-4-yl)-2-oxopropyl phosphate + H2O. It participates in amino-acid biosynthesis; L-histidine biosynthesis; L-histidine from 5-phospho-alpha-D-ribose 1-diphosphate: step 6/9. The polypeptide is Imidazoleglycerol-phosphate dehydratase (Hyphomonas neptunium (strain ATCC 15444)).